A 128-amino-acid chain; its full sequence is Transmembrane protein 234 homolog (128 aa).

4 consecutive transmembrane segments (helical) span residues 3–23, 53–73, 80–100, and 104–124; these read TYNI…NPLI, PSYT…FYTL, LVVP…GMLL, and VLHF…TICV.

Belongs to the TMEM234 family.

It is found in the membrane. The protein is Transmembrane protein 234 homolog of Dictyostelium discoideum (Social amoeba).